The sequence spans 156 residues: Putative pre-16S rRNA nuclease (156 aa).

Belongs to the YqgF nuclease family.

It localises to the cytoplasm. In terms of biological role, could be a nuclease involved in processing of the 5'-end of pre-16S rRNA. The polypeptide is Putative pre-16S rRNA nuclease (Albidiferax ferrireducens (strain ATCC BAA-621 / DSM 15236 / T118) (Rhodoferax ferrireducens)).